The chain runs to 150 residues: Cytochrome c oxidase subunit 5A, mitochondrial (150 aa).

The N-terminal 41 residues, 1 to 41 (MLGAALRRCAVAATTWAGPRGLLHSSRTPGPAAAIQSVRCY), are a transit peptide targeting the mitochondrion. Residues 2-17 (LGAALRRCAVAATTWA) carry the SIFI-degron motif. An N6-acetyllysine mark is found at Lys87 and Lys113. A Phosphothreonine modification is found at Thr141.

The protein belongs to the cytochrome c oxidase subunit 5A family. Component of the cytochrome c oxidase (complex IV, CIV), a multisubunit enzyme composed of 14 subunits. The complex is composed of a catalytic core of 3 subunits MT-CO1, MT-CO2 and MT-CO3, encoded in the mitochondrial DNA, and 11 supernumerary subunits COX4I, COX5A, COX5B, COX6A, COX6B, COX6C, COX7A, COX7B, COX7C, COX8 and NDUFA4, which are encoded in the nuclear genome. The complex exists as a monomer or a dimer and forms supercomplexes (SCs) in the inner mitochondrial membrane with NADH-ubiquinone oxidoreductase (complex I, CI) and ubiquinol-cytochrome c oxidoreductase (cytochrome b-c1 complex, complex III, CIII), resulting in different assemblies (supercomplex SCI(1)III(2)IV(1) and megacomplex MCI(2)III(2)IV(2)). Interacts with AFG1L. Interacts with RAB5IF. Post-translationally, in response to mitochondrial stress, the precursor protein is ubiquitinated by the SIFI complex in the cytoplasm before mitochondrial import, leading to its degradation. Within the SIFI complex, UBR4 initiates ubiquitin chain that are further elongated or branched by KCMF1.

The protein localises to the mitochondrion inner membrane. Its pathway is energy metabolism; oxidative phosphorylation. Its function is as follows. Component of the cytochrome c oxidase, the last enzyme in the mitochondrial electron transport chain which drives oxidative phosphorylation. The respiratory chain contains 3 multisubunit complexes succinate dehydrogenase (complex II, CII), ubiquinol-cytochrome c oxidoreductase (cytochrome b-c1 complex, complex III, CIII) and cytochrome c oxidase (complex IV, CIV), that cooperate to transfer electrons derived from NADH and succinate to molecular oxygen, creating an electrochemical gradient over the inner membrane that drives transmembrane transport and the ATP synthase. Cytochrome c oxidase is the component of the respiratory chain that catalyzes the reduction of oxygen to water. Electrons originating from reduced cytochrome c in the intermembrane space (IMS) are transferred via the dinuclear copper A center (CU(A)) of subunit 2 and heme A of subunit 1 to the active site in subunit 1, a binuclear center (BNC) formed by heme A3 and copper B (CU(B)). The BNC reduces molecular oxygen to 2 water molecules using 4 electrons from cytochrome c in the IMS and 4 protons from the mitochondrial matrix. This Colobus guereza (Mantled guereza) protein is Cytochrome c oxidase subunit 5A, mitochondrial (COX5A).